A 403-amino-acid chain; its full sequence is Argininosuccinate synthase (403 aa).

10–18 contributes to the ATP binding site; sequence AYSGGLDTS. Tyr87 contacts L-citrulline. Gly117 contributes to the ATP binding site. L-aspartate-binding residues include Thr119, Asn123, and Asp124. L-citrulline is bound at residue Asn123. L-citrulline is bound by residues Arg127, Ser175, Glu260, and Tyr272.

The protein belongs to the argininosuccinate synthase family. Type 1 subfamily. Homotetramer.

It localises to the cytoplasm. The catalysed reaction is L-citrulline + L-aspartate + ATP = 2-(N(omega)-L-arginino)succinate + AMP + diphosphate + H(+). Its pathway is amino-acid biosynthesis; L-arginine biosynthesis; L-arginine from L-ornithine and carbamoyl phosphate: step 2/3. The polypeptide is Argininosuccinate synthase (Bacillus subtilis (strain 168)).